Consider the following 429-residue polypeptide: Fc receptor-like protein 1 (429 aa).

Residues 1–16 (MLPRLLLLICAPLCEP) form the signal peptide. Ig-like C2-type domains are found at residues 17–104 (AELF…SQIN), 109–200 (PVAD…VSIT), and 208–291 (PILM…EAVT). The Extracellular segment spans residues 17 to 307 (AELFLIASPS…TGARSNHLTS (291 aa)). Disulfide bonds link cysteine 38-cysteine 86, cysteine 134-cysteine 183, and cysteine 229-cysteine 276. A glycan (N-linked (GlcNAc...) asparagine) is linked at asparagine 293. A helical transmembrane segment spans residues 308-328 (GVIEGLLSTLGPATVALLFCY). The Cytoplasmic portion of the chain corresponds to 329-429 (GLKRKIGRRS…ITDVDYEDAM (101 aa)). 5 consecutive short sequence motifs (ITIM motif) follow at residues 354 to 359 (FTYLNS), 367 to 372 (PIYENV), 379 to 384 (EVYSLA), 410 to 415 (DIYSRL), and 423 to 428 (VDYEDA).

Interacts with ABL1. Interacts with GRB2 and SOS1. Interacts with SHIP-1/INPP5D. Phosphorylated on tyrosines upon activation. Primarily expressed in secondary lymphoid tissues by mature subsets of B-cells. Detected in spleen, lymph node, heart, skeletal muscle, kidney, liver and placenta. Specifically expressed by mature B lineage cells with higher expression in naive versus memory B-cells (at protein level).

The protein localises to the cell membrane. Type I transmembrane surface glycoprotein preferentially expressed by B-cells that regulates BCR-mediated signaling responses. Recruits ABL1 as the intracellular effector molecule to enhance B-cell activation. Also plays a negative role by suppressing ERK activation under homeostatic and BCR-stimulated conditions in a GRB2-dependent manner. The sequence is that of Fc receptor-like protein 1 (FCRL1) from Homo sapiens (Human).